The chain runs to 452 residues: Bifunctional protein GlmU (452 aa).

A pyrophosphorylase region spans residues 1 to 232; the sequence is MTARNSLTIV…EDEVRGINTK (232 aa). UDP-N-acetyl-alpha-D-glucosamine-binding positions include 11-14, lysine 25, glutamine 78, and 83-84; these read LAAG and GT. Aspartate 108 is a binding site for Mg(2+). UDP-N-acetyl-alpha-D-glucosamine-binding residues include glycine 144, glutamate 158, asparagine 173, and asparagine 230. Asparagine 230 provides a ligand contact to Mg(2+). A linker region spans residues 233–253; the sequence is AQLAEAETVMQTRLRLAAMAA. The tract at residues 254 to 452 is N-acetyltransferase; sequence GVTLIAPETV…KSRHRKPKAH (199 aa). UDP-N-acetyl-alpha-D-glucosamine contacts are provided by arginine 319 and lysine 337. The active-site Proton acceptor is the histidine 349. Tyrosine 352 and asparagine 363 together coordinate UDP-N-acetyl-alpha-D-glucosamine. Acetyl-CoA contacts are provided by residues alanine 366, 372–373, serine 391, serine 409, and arginine 426; that span reads NY.

This sequence in the N-terminal section; belongs to the N-acetylglucosamine-1-phosphate uridyltransferase family. The protein in the C-terminal section; belongs to the transferase hexapeptide repeat family. Homotrimer. Mg(2+) serves as cofactor.

It localises to the cytoplasm. The catalysed reaction is alpha-D-glucosamine 1-phosphate + acetyl-CoA = N-acetyl-alpha-D-glucosamine 1-phosphate + CoA + H(+). The enzyme catalyses N-acetyl-alpha-D-glucosamine 1-phosphate + UTP + H(+) = UDP-N-acetyl-alpha-D-glucosamine + diphosphate. The protein operates within nucleotide-sugar biosynthesis; UDP-N-acetyl-alpha-D-glucosamine biosynthesis; N-acetyl-alpha-D-glucosamine 1-phosphate from alpha-D-glucosamine 6-phosphate (route II): step 2/2. It functions in the pathway nucleotide-sugar biosynthesis; UDP-N-acetyl-alpha-D-glucosamine biosynthesis; UDP-N-acetyl-alpha-D-glucosamine from N-acetyl-alpha-D-glucosamine 1-phosphate: step 1/1. It participates in bacterial outer membrane biogenesis; LPS lipid A biosynthesis. Its function is as follows. Catalyzes the last two sequential reactions in the de novo biosynthetic pathway for UDP-N-acetylglucosamine (UDP-GlcNAc). The C-terminal domain catalyzes the transfer of acetyl group from acetyl coenzyme A to glucosamine-1-phosphate (GlcN-1-P) to produce N-acetylglucosamine-1-phosphate (GlcNAc-1-P), which is converted into UDP-GlcNAc by the transfer of uridine 5-monophosphate (from uridine 5-triphosphate), a reaction catalyzed by the N-terminal domain. The chain is Bifunctional protein GlmU from Rhodopseudomonas palustris (strain ATCC BAA-98 / CGA009).